We begin with the raw amino-acid sequence, 428 residues long: Adenylosuccinate synthetase (428 aa).

Residues Gly-12–Lys-18 and Gly-40–Thr-42 each bind GTP. Asp-13 (proton acceptor) is an active-site residue. Residues Asp-13 and Gly-40 each contribute to the Mg(2+) site. IMP contacts are provided by residues Asp-13–Lys-16, Asn-38–His-41, Thr-130, Arg-144, Gln-225, Thr-240, and Arg-304. Residue His-41 is the Proton donor of the active site. Val-300–Arg-306 lines the substrate pocket. GTP-binding positions include Arg-306, Lys-332–Asp-334, and Ser-414–Gly-416.

The protein belongs to the adenylosuccinate synthetase family. As to quaternary structure, homodimer. Requires Mg(2+) as cofactor.

The protein resides in the cytoplasm. It catalyses the reaction IMP + L-aspartate + GTP = N(6)-(1,2-dicarboxyethyl)-AMP + GDP + phosphate + 2 H(+). It participates in purine metabolism; AMP biosynthesis via de novo pathway; AMP from IMP: step 1/2. Its function is as follows. Plays an important role in the de novo pathway of purine nucleotide biosynthesis. Catalyzes the first committed step in the biosynthesis of AMP from IMP. The protein is Adenylosuccinate synthetase of Clostridium botulinum (strain ATCC 19397 / Type A).